The primary structure comprises 381 residues: Dual specificity protein phosphatase 6 (381 aa).

Residues 30–148 form the Rhodanese domain; the sequence is GNERLLLMDC…FQAEFALHCE (119 aa). The segment at 176–203 is disordered; sequence SSSDIESDLDRDPNSATDSDGSPLSNSQ. Over residues 189-203 the composition is skewed to polar residues; that stretch reads NSATDSDGSPLSNSQ. A Tyrosine-protein phosphatase domain is found at 206 to 349; it reads FPVEILPFLY…LLDFERTLGL (144 aa). C293 serves as the catalytic Phosphocysteine intermediate.

The protein belongs to the protein-tyrosine phosphatase family. Non-receptor class dual specificity subfamily. As to quaternary structure, interacts with MAPK1/ERK2. Ubiquitinated by the SCF(FBXO31) complex, leading to its proteasomal degradation.

Its subcellular location is the cytoplasm. The catalysed reaction is O-phospho-L-tyrosyl-[protein] + H2O = L-tyrosyl-[protein] + phosphate. It catalyses the reaction O-phospho-L-seryl-[protein] + H2O = L-seryl-[protein] + phosphate. It carries out the reaction O-phospho-L-threonyl-[protein] + H2O = L-threonyl-[protein] + phosphate. Dual specificity protein phosphatase, which mediates dephosphorylation and inactivation of MAP kinases. Has a specificity for the ERK family. Plays an important role in alleviating acute postoperative pain. Necessary for the normal dephosphorylation of the long-lasting phosphorylated forms of spinal MAPK1/3 and MAP kinase p38 induced by peripheral surgery, which drives the resolution of acute postoperative allodynia. Also important for dephosphorylation of MAPK1/3 in local wound tissue, which further contributes to resolution of acute pain. The sequence is that of Dual specificity protein phosphatase 6 (Dusp6) from Mus musculus (Mouse).